Here is a 232-residue protein sequence, read N- to C-terminus: Aquaporin Z 2 (232 aa).

The next 2 membrane-spanning stretches (helical) occupy residues 9 to 29 (FLGT…ASAF) and 32 to 52 (VGIG…TMAY). Positions 63-65 (NPA) match the NPA 1 motif. A run of 3 helical transmembrane segments spans residues 82 to 102 (VSYV…LYVI), 129 to 149 (LTAA…IILG), and 158 to 178 (GFAP…SIPV). The NPA 2 signature appears at 184-186 (NPA). Residues 200-220 (LSQLWLFWIAPLFGAAIAGIV) traverse the membrane as a helical segment.

The protein belongs to the MIP/aquaporin (TC 1.A.8) family. In terms of assembly, homotetramer.

Its subcellular location is the cell inner membrane. The enzyme catalyses H2O(in) = H2O(out). Its function is as follows. Channel that permits osmotically driven movement of water in both directions. It is involved in the osmoregulation and in the maintenance of cell turgor during volume expansion in rapidly growing cells. It mediates rapid entry or exit of water in response to abrupt changes in osmolarity. This Rhizobium meliloti (strain 1021) (Ensifer meliloti) protein is Aquaporin Z 2.